We begin with the raw amino-acid sequence, 778 residues long: Degenerin deg-1 (778 aa).

Residues Met1–Met82 are Cytoplasmic-facing. Residues Trp83–Phe103 traverse the membrane as a helical segment. The Extracellular portion of the chain corresponds to Lys104–Gly711. A compositionally biased stretch (basic and acidic residues) spans Asn154–Lys165. 2 disordered regions span residues Asn154–Gln180 and Ser201–Ile220. N-linked (GlcNAc...) asparagine glycosylation is found at Asn202, Asn209, Asn272, and Asn342. Residues Thr346 to Thr369 show a composition bias toward low complexity. Residues Thr346–Asn380 form a disordered region. 3 N-linked (GlcNAc...) asparagine glycosylation sites follow: Asn473, Asn492, and Asn606. A helical membrane pass occupies residues His712–Val732. Residues Asp733–Ile778 are Cytoplasmic-facing.

It belongs to the amiloride-sensitive sodium channel (TC 1.A.6) family.

It is found in the membrane. Probable sodium channel subunit. Required by a subset of neurons. The polypeptide is Degenerin deg-1 (Caenorhabditis elegans).